Here is a 71-residue protein sequence, read N- to C-terminus: Movement protein TGBp3 (71 aa).

Residues 1–4 are Lumenal-facing; that stretch reads MWSD. The chain crosses the membrane as a helical span at residues 5–27; the sequence is SLVSRICVPIIVVCTSIALLNVV. Residues 28–71 lie on the Cytoplasmic side of the membrane; the sequence is SFRSECSCVVHISGAAIDIRGCSFTPDFIEYAKTLRVFNHRYQE.

This sequence belongs to the Tymovirales TGBp3 protein family.

The protein resides in the host endoplasmic reticulum membrane. Its function is as follows. Plays a role in viral cell-to-cell propagation, by facilitating genome transport to neighboring plant cells through plasmosdesmata. May induce the formation of granular vesicles derived from the Endoplasmic reticulum, which align on actin filaments. The sequence is that of Movement protein TGBp3 from Populus balsamifera (Balsam poplar).